The primary structure comprises 409 residues: Cdc42 effector protein 1 (409 aa).

Residues 1–29 (MPGPQGGTGAPTMSLGKLSPVGWVSSSHG) form a disordered region. S19 and S27 each carry phosphoserine. Position 34 is a phosphothreonine (T34). The 15-residue stretch at 38 to 52 (ISPPLGDFRHTMHVG) folds into the CRIB domain. At S39 the chain carries Phosphoserine. Omega-N-methylarginine is present on R53. 6 positions are modified to phosphoserine: S65, S77, S101, S113, S121, and S139. Residues 167-189 (PRVEKHSNRDRDRDPDHSQDREQ) are compositionally biased toward basic and acidic residues. Residues 167–203 (PRVEKHSNRDRDRDPDHSQDREQSSFPSEPTPNPELR) are disordered. 4 positions are modified to phosphoserine: S191, S205, S207, and S210. Repeat copies occupy residues 235 to 241 (PAAETPV), 242 to 248 (PTANPPA), and 255 to 261 (PTAKPPA). The tract at residues 235–284 (PAAETPVPTANPPAPAANPAPTAKPPAHAITTLDAVTSLPASAVTSLPAP) is 3 X 7 AA tandem repeats of [PT]-[AT]-A-[ENT]-[PT]-[PTS]-[AG]. Disordered stretches follow at residues 237 to 260 (AETP…AKPP) and 282 to 329 (PAPA…FDRH). Positions 243 to 258 (TANPPAPAANPAPTAK) are enriched in pro residues. Over residues 282-291 (PAPAAASSPS) the composition is skewed to low complexity. S312, S332, S368, and S371 each carry phosphoserine.

Belongs to the BORG/CEP family. Interacts with RHOQ and CDC42, in a GTP-dependent manner.

Its subcellular location is the endomembrane system. It is found in the cytoplasm. It localises to the cytoskeleton. Functionally, probably involved in the organization of the actin cytoskeleton. Induced membrane extensions in fibroblasts. This chain is Cdc42 effector protein 1 (Cdc42ep1), found in Mus musculus (Mouse).